The following is a 207-amino-acid chain: ATP-dependent Clp protease proteolytic subunit (207 aa).

Catalysis depends on Ser-111, which acts as the Nucleophile. Residue His-136 is part of the active site.

This sequence belongs to the peptidase S14 family. As to quaternary structure, fourteen ClpP subunits assemble into 2 heptameric rings which stack back to back to give a disk-like structure with a central cavity, resembling the structure of eukaryotic proteasomes. Component of the ClpAP and ClpXP complexes.

It is found in the cytoplasm. The catalysed reaction is Hydrolysis of proteins to small peptides in the presence of ATP and magnesium. alpha-casein is the usual test substrate. In the absence of ATP, only oligopeptides shorter than five residues are hydrolyzed (such as succinyl-Leu-Tyr-|-NHMec, and Leu-Tyr-Leu-|-Tyr-Trp, in which cleavage of the -Tyr-|-Leu- and -Tyr-|-Trp bonds also occurs).. In terms of biological role, cleaves peptides in various proteins in a process that requires ATP hydrolysis. Has a chymotrypsin-like activity. Plays a major role in the degradation of misfolded proteins. This Escherichia coli O139:H28 (strain E24377A / ETEC) protein is ATP-dependent Clp protease proteolytic subunit.